A 312-amino-acid polypeptide reads, in one-letter code: MNMDEEASLESYFDQTIAGSSDYIFEGDLGLQGSTSQLQDSSFLSSLASQEKDLTEDLDLSFLPDELSTQDEPSQVEKESKNEDSGIYTDCPQKESTQADIDTSNSAQNTSQFNLPMTPMTPMTPMTPVAESSGIIPQLQNIVSTVNLACPLDLKSIALQARNAEYNPKRFAAVIMRIREPRTTALIFSSGKMVCTGAKSEEQSRLAARKYARVVQKLGFPAKFLDFKIQNMVGSCDVCFPIRLEGLVLTHQQFSSYEPELFPGLIYRMVKPRIVLLIFVSGKVVLTGAKERSEIYEAFENIYPILKGFRKQ.

A disordered region spans residues 65-115; it reads DELSTQDEPSQVEKESKNEDSGIYTDCPQKESTQADIDTSNSAQNTSQFNL. The span at 75–84 shows a compositional bias: basic and acidic residues; it reads QVEKESKNED. Residues 94-115 show a composition bias toward polar residues; that stretch reads KESTQADIDTSNSAQNTSQFNL.

It belongs to the TBP family. In terms of tissue distribution, in adults, expressed in the gonads, with expression much higher in the ovary than the testis (at protein level). Shows a small amount of expression in other adult organs, including the brain and kidney. Embryonic expression is mostly ubiquitous except in early gastrula embryos where expression is asymmetric.

The protein resides in the nucleus. Functionally, TATA box-binding transcription factor. Members of the TBP family are differentially required to regulate transcription and development during early embryogenesis. Commits mesoderm to the hematopoietic lineage during hemopoiesis, acting via mespa. Binds to the mespa promoter. This chain is TATA box-binding protein-like 2, found in Danio rerio (Zebrafish).